Reading from the N-terminus, the 509-residue chain is 5-hydroxytryptamine receptor (509 aa).

At 1–99 the chain is on the extracellular side; sequence MANFTFGDLA…YSHEHLVLTS (99 aa). Residues Asn-3, Asn-47, Asn-58, Asn-68, Asn-72, and Asn-78 are each glycosylated (N-linked (GlcNAc...) asparagine). A helical membrane pass occupies residues 100-122; sequence VILGLFVLCCIIGNCFVIAAVML. The Cytoplasmic portion of the chain corresponds to 123–132; the sequence is ERSLHNVANY. A helical membrane pass occupies residues 133-154; the sequence is LILSLAVADLMVAVLVMPLSVV. Residues 155-169 are Extracellular-facing; the sequence is SEISKVWFLHSEVCD. Cys-168 and Cys-246 are joined by a disulfide. Residues 170–191 traverse the membrane as a helical segment; that stretch reads MWISVDVLCCTASILHLVAIAM. Over 192–210 the chain is Cytoplasmic; that stretch reads DRYWAVTSIDYIRRRSARR. Residues 211 to 233 form a helical membrane-spanning segment; sequence ILLMIMVVWIVALFISIPPLFGW. Topologically, residues 234–259 are extracellular; that stretch reads RDPNNDPDKTGTCIISQDKGYTIFST. Residues 260–281 traverse the membrane as a helical segment; that stretch reads VGAFYLPMLVMMIIYIRIWLVA. Residues 282–432 lie on the Cytoplasmic side of the membrane; it reads RSRIRKDKFQ…LKRERKAART (151 aa). The segment at 323–372 is disordered; sequence SPDSTTEKKKRRAPFKSYGCSPRPERKKNRAKKLPENANGVNSNSSSSER. Residues 433-456 form a helical membrane-spanning segment; sequence LAIITGAFLICWLPFFIIALIGPF. The Extracellular portion of the chain corresponds to 457–465; sequence VDPEGIPPF. A helical transmembrane segment spans residues 466 to 488; it reads ARSFVLWLGYFNSLLNPIIYTIF. At 489-509 the chain is on the cytoplasmic side; that stretch reads SPEFRSAFQKILFGKYRRGHR.

It belongs to the G-protein coupled receptor 1 family.

The protein localises to the cell membrane. This is a receptor for 5-hydroxytryptamine (serotonin), a biogenic hormone that function as a neurotransmitter, a hormone, and a mitogen. This chain is 5-hydroxytryptamine receptor, found in Lymnaea stagnalis (Great pond snail).